The chain runs to 120 residues: UPF0295 protein Exig_0660 (120 aa).

2 helical membrane-spanning segments follow: residues 16-36 and 41-61; these read AMFL…LKQF and VILM…YFLI.

This sequence belongs to the UPF0295 family.

Its subcellular location is the cell membrane. This chain is UPF0295 protein Exig_0660, found in Exiguobacterium sibiricum (strain DSM 17290 / CCUG 55495 / CIP 109462 / JCM 13490 / 255-15).